Here is a 231-residue protein sequence, read N- to C-terminus: Ion-translocating oxidoreductase complex subunit E (231 aa).

The next 6 membrane-spanning stretches (helical) occupy residues 18-38 (GLVQLLGLCPLLAVTATVTNA), 39-59 (LGLGFATLLVLVGSNMLVSLV), 69-89 (IPVFVMIIAALVTSVQLLINA), 93-113 (GLYLSLGIFLPLIVTNCVIIG), 128-148 (AFDGLMMGIGFTCVLVVLGAG), and 182-202 (PFLLALLPPGAFIGMGLLIAG).

This sequence belongs to the NqrDE/RnfAE family. In terms of assembly, the complex is composed of six subunits: RnfA, RnfB, RnfC, RnfD, RnfE and RnfG.

Its subcellular location is the cell inner membrane. Its function is as follows. Part of a membrane-bound complex that couples electron transfer with translocation of ions across the membrane. The polypeptide is Ion-translocating oxidoreductase complex subunit E (Shewanella denitrificans (strain OS217 / ATCC BAA-1090 / DSM 15013)).